A 126-amino-acid chain; its full sequence is Fluoride-specific ion channel FluC (126 aa).

A run of 4 helical transmembrane segments spans residues 5 to 25 (FILAVAAGGALGSVARYLVGI), 39 to 59 (TLFINVTGSLLIGIFAGLFAV), 69 to 89 (IFLVVGICGGYTTFSTFSLDT), and 103 to 123 (AYMIGSVVLSVGALIAGIQIV). Residues G77 and T80 each contribute to the Na(+) site.

This sequence belongs to the fluoride channel Fluc/FEX (TC 1.A.43) family.

It is found in the cell inner membrane. It catalyses the reaction fluoride(in) = fluoride(out). Its activity is regulated as follows. Na(+) is not transported, but it plays an essential structural role and its presence is essential for fluoride channel function. Functionally, fluoride-specific ion channel. Important for reducing fluoride concentration in the cell, thus reducing its toxicity. The sequence is that of Fluoride-specific ion channel FluC from Nitrobacter winogradskyi (strain ATCC 25391 / DSM 10237 / CIP 104748 / NCIMB 11846 / Nb-255).